The primary structure comprises 623 residues: Serine/threonine-protein kinase MAK (623 aa).

A Protein kinase domain is found at 4–284 (YTTMRQLGDG…ASQALKHPYF (281 aa)). Residues 10-18 (LGDGTYGSV) and Lys33 contribute to the ATP site. Residue Asp125 is the Proton acceptor of the active site. Phosphothreonine; by autocatalysis is present on Thr157. Tyr159 bears the Phosphotyrosine; by autocatalysis mark. 2 disordered regions span residues 328-396 (IDQV…RRRW) and 416-469 (GASH…SDSE). Over residues 356-369 (QQPPKQQSQEKPPQ) the composition is skewed to low complexity. Over residues 446-455 (SGSNHSTGEN) the composition is skewed to polar residues.

It belongs to the protein kinase superfamily. CMGC Ser/Thr protein kinase family. CDC2/CDKX subfamily. In terms of assembly, interacts with RP1. Interacts with AR and CDK20. Found in a complex containing MAK, AR and NCOA3. Interacts with FZR1 (via WD repeats). The cofactor is Mg(2+). Post-translationally, autophosphorylated. Phosphorylated on serine and threonine residues. In terms of tissue distribution, expressed in prostate cancer cell lines at generally higher levels than in normal prostate epithelial cell lines. Isoform 1 is expressed in kidney, testis, lung, trachea, and retina. Isoform 2 is retina-specific where it is expressed in rod and cone photoreceptors.

It localises to the nucleus. It is found in the cytoplasm. Its subcellular location is the cytoskeleton. The protein localises to the microtubule organizing center. The protein resides in the centrosome. It localises to the spindle. It is found in the midbody. Its subcellular location is the cell projection. The protein localises to the cilium. The protein resides in the photoreceptor outer segment. It localises to the photoreceptor inner segment. It carries out the reaction L-seryl-[protein] + ATP = O-phospho-L-seryl-[protein] + ADP + H(+). The catalysed reaction is L-threonyl-[protein] + ATP = O-phospho-L-threonyl-[protein] + ADP + H(+). Functionally, essential for the regulation of ciliary length and required for the long-term survival of photoreceptors. Phosphorylates FZR1 in a cell cycle-dependent manner. Plays a role in the transcriptional coactivation of AR. Could play an important function in spermatogenesis. May play a role in chromosomal stability in prostate cancer cells. The polypeptide is Serine/threonine-protein kinase MAK (MAK) (Homo sapiens (Human)).